The sequence spans 274 residues: 2,3,4,5-tetrahydropyridine-2,6-dicarboxylate N-succinyltransferase (274 aa).

Substrate is bound by residues R107 and D144.

The protein belongs to the transferase hexapeptide repeat family. In terms of assembly, homotrimer.

It localises to the cytoplasm. It carries out the reaction (S)-2,3,4,5-tetrahydrodipicolinate + succinyl-CoA + H2O = (S)-2-succinylamino-6-oxoheptanedioate + CoA. It participates in amino-acid biosynthesis; L-lysine biosynthesis via DAP pathway; LL-2,6-diaminopimelate from (S)-tetrahydrodipicolinate (succinylase route): step 1/3. The chain is 2,3,4,5-tetrahydropyridine-2,6-dicarboxylate N-succinyltransferase from Cereibacter sphaeroides (strain ATCC 17025 / ATH 2.4.3) (Rhodobacter sphaeroides).